A 77-amino-acid polypeptide reads, in one-letter code: UPF0346 protein LMOf2365_1885 (77 aa).

Belongs to the UPF0346 family.

This Listeria monocytogenes serotype 4b (strain F2365) protein is UPF0346 protein LMOf2365_1885.